We begin with the raw amino-acid sequence, 290 residues long: Phosphatidylserine decarboxylase proenzyme (290 aa).

Active-site charge relay system; for autoendoproteolytic cleavage activity residues include D96, H153, and S257. S257 (schiff-base intermediate with substrate; via pyruvic acid; for decarboxylase activity) is an active-site residue. At S257 the chain carries Pyruvic acid (Ser); by autocatalysis.

The protein belongs to the phosphatidylserine decarboxylase family. PSD-B subfamily. Prokaryotic type I sub-subfamily. Heterodimer of a large membrane-associated beta subunit and a small pyruvoyl-containing alpha subunit. Requires pyruvate as cofactor. Is synthesized initially as an inactive proenzyme. Formation of the active enzyme involves a self-maturation process in which the active site pyruvoyl group is generated from an internal serine residue via an autocatalytic post-translational modification. Two non-identical subunits are generated from the proenzyme in this reaction, and the pyruvate is formed at the N-terminus of the alpha chain, which is derived from the carboxyl end of the proenzyme. The autoendoproteolytic cleavage occurs by a canonical serine protease mechanism, in which the side chain hydroxyl group of the serine supplies its oxygen atom to form the C-terminus of the beta chain, while the remainder of the serine residue undergoes an oxidative deamination to produce ammonia and the pyruvoyl prosthetic group on the alpha chain. During this reaction, the Ser that is part of the protease active site of the proenzyme becomes the pyruvoyl prosthetic group, which constitutes an essential element of the active site of the mature decarboxylase.

It localises to the cell membrane. It carries out the reaction a 1,2-diacyl-sn-glycero-3-phospho-L-serine + H(+) = a 1,2-diacyl-sn-glycero-3-phosphoethanolamine + CO2. The protein operates within phospholipid metabolism; phosphatidylethanolamine biosynthesis; phosphatidylethanolamine from CDP-diacylglycerol: step 2/2. Its function is as follows. Catalyzes the formation of phosphatidylethanolamine (PtdEtn) from phosphatidylserine (PtdSer). The chain is Phosphatidylserine decarboxylase proenzyme from Haemophilus influenzae (strain ATCC 51907 / DSM 11121 / KW20 / Rd).